Consider the following 65-residue polypeptide: Large ribosomal subunit protein bL35 (65 aa).

The segment covering 1-16 (MPKMKTKKSAAKRFKV) has biased composition (basic residues). Residues 1–25 (MPKMKTKKSAAKRFKVRGSGSIKRG) form a disordered region.

This sequence belongs to the bacterial ribosomal protein bL35 family.

This Bordetella parapertussis (strain 12822 / ATCC BAA-587 / NCTC 13253) protein is Large ribosomal subunit protein bL35.